The primary structure comprises 574 residues: Glycine--tRNA ligase (574 aa).

2 residues coordinate substrate: R96 and E162. ATP is bound by residues 194–196 (RNE), 204–209 (IRLREF), 327–328 (EC), and 450–453 (GIDR). Residue 209 to 213 (FTQAE) participates in substrate binding. Residue 446–450 (EPSYG) coordinates substrate.

This sequence belongs to the class-II aminoacyl-tRNA synthetase family.

The protein resides in the cytoplasm. The catalysed reaction is tRNA(Gly) + glycine + ATP = glycyl-tRNA(Gly) + AMP + diphosphate. Catalyzes the attachment of glycine to tRNA(Gly). This Methanococcus maripaludis (strain DSM 14266 / JCM 13030 / NBRC 101832 / S2 / LL) protein is Glycine--tRNA ligase.